The primary structure comprises 527 residues: Flavonoid 3',5'-hydroxylase CYP75B138 (527 aa).

A helical membrane pass occupies residues 6–26 (LDIILFISAIVFLSIYYYNLF). Cys459 is a heme binding site.

Belongs to the cytochrome P450 family. Requires heme as cofactor. In terms of tissue distribution, expressed in young cromes.

Its subcellular location is the membrane. The catalysed reaction is a 3',5'-unsubstituted flavanone + 2 reduced [NADPH--hemoprotein reductase] + 2 O2 = a 3',5'-dihydroxyflavanone + 2 oxidized [NADPH--hemoprotein reductase] + 2 H2O + 2 H(+). It catalyses the reaction (2S)-naringenin + 2 reduced [NADPH--hemoprotein reductase] + 2 O2 = (2S)-dihydrotricetin + 2 oxidized [NADPH--hemoprotein reductase] + 2 H2O + 2 H(+). It carries out the reaction (2R,3R)-dihydrokaempferol + 2 reduced [NADPH--hemoprotein reductase] + 2 O2 = (2R,3R)-dihydromyricetin + 2 oxidized [NADPH--hemoprotein reductase] + 2 H2O + 2 H(+). The enzyme catalyses kaempferol + 2 reduced [NADPH--hemoprotein reductase] + 2 O2 = myricetin + 2 oxidized [NADPH--hemoprotein reductase] + 2 H2O + 2 H(+). It functions in the pathway flavonoid metabolism. Its function is as follows. Flavonoid 3',5'-hydroxylase that catalyzes the 3'- and 5'-hydroxylation of flavanones, dihydroflavonols and flavonols. Converts narigenin to dihydrotricetin, dihydrokaempferol to dihydromyricetin and kaempferol to myricetin. The chain is Flavonoid 3',5'-hydroxylase CYP75B138 from Crocosmia x crocosmiiflora (Montbretia).